An 881-amino-acid polypeptide reads, in one-letter code: Phosphoenolpyruvate carboxylase (881 aa).

Catalysis depends on residues H142 and K547.

Belongs to the PEPCase type 1 family. The cofactor is Mg(2+).

The catalysed reaction is oxaloacetate + phosphate = phosphoenolpyruvate + hydrogencarbonate. Its function is as follows. Forms oxaloacetate, a four-carbon dicarboxylic acid source for the tricarboxylic acid cycle. This chain is Phosphoenolpyruvate carboxylase, found in Hahella chejuensis (strain KCTC 2396).